The following is a 660-amino-acid chain: Methionine--tRNA ligase 1 (660 aa).

The 'HIGH' region signature appears at 15-25 (YYPSGKLHIGH). Positions 310 to 314 (KMSKS) match the 'KMSKS' region motif. Residue lysine 313 coordinates ATP. Residues 560-660 (DFFKVELRVA…QNIPNGTKIK (101 aa)) form the tRNA-binding domain.

Belongs to the class-I aminoacyl-tRNA synthetase family. MetG type 2B subfamily. In terms of assembly, homodimer.

The protein localises to the cytoplasm. The enzyme catalyses tRNA(Met) + L-methionine + ATP = L-methionyl-tRNA(Met) + AMP + diphosphate. In terms of biological role, is required not only for elongation of protein synthesis but also for the initiation of all mRNA translation through initiator tRNA(fMet) aminoacylation. The sequence is that of Methionine--tRNA ligase 1 from Bacillus anthracis.